The sequence spans 416 residues: Vacuole membrane protein KMS1 (416 aa).

Gly-2 bears the N-acetylglycine mark. At 2–60 (GSAGVASSSSDVAISALREKHEKEVENLTLTTQPLNTLKLFVEATIQYIKRSISYLLAH) the chain is on the cytoplasmic side. The helical transmembrane segment at 61 to 81 (GGWFILITTLLVVSGGLLVTV) threads the bilayer. The Lumenal segment spans residues 82-101 (DGPHGKHVEEVLEYVRYGLW). A helical membrane pass occupies residues 102-124 (WIALGVASSIGLGSGLHTFVLYL). At 125–257 (GPHIALFTLK…WLLTHSQHLN (133 aa)) the chain is on the cytoplasmic side. A helical transmembrane segment spans residues 258–278 (FFTVLVLASVPNPLFDLAGIM). The Lumenal portion of the chain corresponds to 279-289 (CGQFGIPFWEF). Residues 290–312 (FLATLIGKAIIKTHIQTIFIICV) traverse the membrane as a helical segment. Residues 313–323 (CNNQLLDWMEN) lie on the Cytoplasmic side of the membrane. The helical transmembrane segment at 324–344 (ELIWILSHVPGLASMLPGLTA) threads the bilayer. Topologically, residues 345 to 372 (KLHAMKEKYIDAPSPVPSHIKVKKWDFS) are lumenal. A helical transmembrane segment spans residues 373-393 (FASIWNGIVWLMLLNFFVKIV). Topologically, residues 394–416 (TATAQRHLKKKQEKEMATLTHSD) are cytoplasmic.

Belongs to the VMP1 family.

Its subcellular location is the endoplasmic reticulum membrane. In terms of biological role, involved in the early secretory pathway. Required for the correct export of secretory products from the endoplasmic reticulum (ER) and involved in the maintenance of ER integrity. This Arabidopsis thaliana (Mouse-ear cress) protein is Vacuole membrane protein KMS1.